A 58-amino-acid chain; its full sequence is Large ribosomal subunit protein bL32 (58 aa).

Belongs to the bacterial ribosomal protein bL32 family.

In Synechococcus sp. (strain WH7803), this protein is Large ribosomal subunit protein bL32.